The chain runs to 410 residues: Demethyl-4-deoxygadusol synthase (410 aa).

NAD(+)-binding positions include 56–58, 87–90, 119–123, 143–144, Lys156, Lys165, and 183–186; these read DAN, EPDK, GLITD, TT, and LLRT. Zn(2+)-binding residues include Glu198, His271, and His287.

Belongs to the sugar phosphate cyclases superfamily. DDGS family. In terms of assembly, homodimer. The cofactor is NAD(+). Co(2+) serves as cofactor. It depends on Zn(2+) as a cofactor.

It catalyses the reaction D-sedoheptulose 7-phosphate = (R)-demethyl-4-deoxygadusol + phosphate + H2O + H(+). In terms of biological role, catalyzes the conversion of sedoheptulose 7-phosphate to demethyl-4-deoxygadusol (DDG). Involved in the synthesis of the mycosporine-like amino acid shinorine, a natural sunscreen compound that protects the cell against UV radiation. The protein is Demethyl-4-deoxygadusol synthase of Trichormus variabilis (strain ATCC 29413 / PCC 7937) (Anabaena variabilis).